Consider the following 361-residue polypeptide: tRNA/tmRNA (uracil-C(5))-methyltransferase (361 aa).

S-adenosyl-L-methionine-binding residues include Gln183, Tyr211, Asn216, Glu232, and Asp294. The Nucleophile role is filled by Cys319. Glu353 serves as the catalytic Proton acceptor.

The protein belongs to the class I-like SAM-binding methyltransferase superfamily. RNA M5U methyltransferase family. TrmA subfamily.

It catalyses the reaction uridine(54) in tRNA + S-adenosyl-L-methionine = 5-methyluridine(54) in tRNA + S-adenosyl-L-homocysteine + H(+). The catalysed reaction is uridine(341) in tmRNA + S-adenosyl-L-methionine = 5-methyluridine(341) in tmRNA + S-adenosyl-L-homocysteine + H(+). Dual-specificity methyltransferase that catalyzes the formation of 5-methyluridine at position 54 (m5U54) in all tRNAs, and that of position 341 (m5U341) in tmRNA (transfer-mRNA). The chain is tRNA/tmRNA (uracil-C(5))-methyltransferase from Acinetobacter baumannii (strain AYE).